Reading from the N-terminus, the 209-residue chain is Orotate phosphoribosyltransferase (209 aa).

Residues Arg-96, Lys-100, His-102, and Glu-122–Ser-130 contribute to the 5-phospho-alpha-D-ribose 1-diphosphate site. Residue Ser-126 participates in orotate binding.

This sequence belongs to the purine/pyrimidine phosphoribosyltransferase family. PyrE subfamily. Homodimer. Requires Mg(2+) as cofactor.

The catalysed reaction is orotidine 5'-phosphate + diphosphate = orotate + 5-phospho-alpha-D-ribose 1-diphosphate. It participates in pyrimidine metabolism; UMP biosynthesis via de novo pathway; UMP from orotate: step 1/2. Functionally, catalyzes the transfer of a ribosyl phosphate group from 5-phosphoribose 1-diphosphate to orotate, leading to the formation of orotidine monophosphate (OMP). The chain is Orotate phosphoribosyltransferase from Streptococcus pyogenes serotype M3 (strain ATCC BAA-595 / MGAS315).